The primary structure comprises 455 residues: UDP-N-acetylmuramoyl-tripeptide--D-alanyl-D-alanine ligase (455 aa).

107–113 lines the ATP pocket; the sequence is GSCGKTS.

Belongs to the MurCDEF family. MurF subfamily.

The protein localises to the cytoplasm. It catalyses the reaction D-alanyl-D-alanine + UDP-N-acetyl-alpha-D-muramoyl-L-alanyl-gamma-D-glutamyl-meso-2,6-diaminopimelate + ATP = UDP-N-acetyl-alpha-D-muramoyl-L-alanyl-gamma-D-glutamyl-meso-2,6-diaminopimeloyl-D-alanyl-D-alanine + ADP + phosphate + H(+). Its pathway is cell wall biogenesis; peptidoglycan biosynthesis. In terms of biological role, involved in cell wall formation. Catalyzes the final step in the synthesis of UDP-N-acetylmuramoyl-pentapeptide, the precursor of murein. The chain is UDP-N-acetylmuramoyl-tripeptide--D-alanyl-D-alanine ligase from Buchnera aphidicola subsp. Acyrthosiphon pisum (strain APS) (Acyrthosiphon pisum symbiotic bacterium).